The primary structure comprises 89 residues: Nucleoside triphosphatase I (89 aa).

Positions 42 to 89 (FLGLDKMHSLLLFHDTGVGKTITTTFIIKQLKNIYTNWSILLLVKKHL) constitute a Helicase ATP-binding domain. An ATP-binding site is contributed by 55-62 (HDTGVGKT).

The protein belongs to the helicase family. NPH I subfamily.

It carries out the reaction a ribonucleoside 5'-triphosphate + H2O = a ribonucleoside 5'-diphosphate + phosphate + H(+). In terms of biological role, serves two roles in transcription; it acts in concert with viral termination factor/capping enzyme to catalyze release of UUUUUNU-containing nascent RNA from the elongation complex, and it acts by itself as a polymerase elongation factor to facilitate readthrough of intrinsic pause sites. This Swinepox virus (strain Kasza) (SWPV) protein is Nucleoside triphosphatase I (NPH1).